Reading from the N-terminus, the 32-residue chain is Delta-conotoxin-like CnVIC (32 aa).

3 cysteine pairs are disulfide-bonded: Cys-3/Cys-18, Cys-10/Cys-22, and Cys-17/Cys-27. 2 positions are modified to 4-hydroxyproline: Pro-6 and Pro-14.

The protein belongs to the conotoxin O1 superfamily. As to expression, expressed by the venom duct.

It localises to the secreted. In terms of biological role, delta-conotoxins bind to site 6 of voltage-gated sodium channels (Nav) and inhibit the inactivation process. This toxin acts on Nav1.2/SCN2A, Nav1.4/SCN4A, Nav1.5/SCN5A (weak activity), Nav1.6/SCN8A (EC(50)=2.5 uM). This Conus consors (Singed cone) protein is Delta-conotoxin-like CnVIC.